The following is a 2633-amino-acid chain: Non-reducing polyketide synthase sor2 (2633 aa).

The interval 67–237 is N-terminal acylcarrier protein transacylase domain (SAT); the sequence is VSNAQKLAEW…TTSTRTVAAL (171 aa). Residue C140 is the Nucleophile; for transacylase activity of the active site. H258 functions as the Proton donor/acceptor; for transacylase activity in the catalytic mechanism. One can recognise a Ketosynthase family 3 (KS3) domain in the interval 389–814; that stretch reads ENDIAVIGMA…GSNASVIIKQ (426 aa). Catalysis depends on for beta-ketoacyl synthase activity residues C561, H696, and H737. A malonyl-CoA:ACP transacylase (MAT) domain region spans residues 928–1239; sequence CFGGQVSTFV…SKASSQLSDV (312 aa). The N-terminal hotdog fold stretch occupies residues 1307 to 1437; that stretch reads PQPVGLYTLL…GQLHFQASDD (131 aa). A PKS/mFAS DH domain is found at 1307-1627; the sequence is PQPVGLYTLL…YAPVSLDQLF (321 aa). The tract at residues 1338-1509 is product template (PT) domain; the sequence is MSDHAIGKAQ…SNESAGRLVR (172 aa). Residues 1464 to 1627 form a C-terminal hotdog fold region; sequence GRSDEVIQGQ…YAPVSLDQLF (164 aa). Positions 1684-1758 constitute a Carrier domain; it reads EELWLRLRPV…GILKFLQSTL (75 aa). S1718 carries the post-translational modification O-(pantetheine 4'-phosphoryl)serine. Residues 1762–1792 form a disordered region; it reads DVHDSSETMSTVSSDGNVHSPPTSGSEMASP. Polar residues predominate over residues 1768–1790; the sequence is ETMSTVSSDGNVHSPPTSGSEMA. Residues 1982 to 2166 form a methyltransferase domain region; sequence FELMADFLTR…ASGFKHVRWT (185 aa). The tract at residues 2253–2495 is NADPH-binding (R) domain; that stretch reads VTGATGSLGS…TLRALPDVDG (243 aa).

Requires pantetheine 4'-phosphate as cofactor.

It functions in the pathway secondary metabolite biosynthesis. Non-reducing polyketide synthase; part of the SOR gene cluster that mediates the biosynthesis of sorbicillinoids, a diverse group of yellow secondary metabolites that restrict growth of competing pathogenic fungi but not of bacteria. Sorbicillinoids biosynthesis requires the action of two PKSs. The SOR cluster is required for the production of trichodimerol and dihydrotrichotetronin, with sor2 being sufficient for production of trichodimerol, but not dihydrotrichotetronin in the light. Sor1 iteratively combines three acetyl units and the growing chain is modified by the ketoacyl reductase subunit, and optional by the enoyl reductase subunit in the second cycle. The polyketide is then handed over to the PKS sor2, which adds three more acetyl units, and two methyl groups. Sor2 releases an aldehyde, which undergoes spontaneous cyclization resulting in the formation of sorbicillin or 2',3'-dihydrosorbicillin. The monooxygenase sor5 oxidizes sorbicillin and 2',3'-dihydrosorbicillin to 2',3'-dihydrosorbicillinol and sorbicillinol, respectively. The oxidoreductase sor8 further converts sorbicillinol into oxosorbicillinol. Sorbicillinol is the building block for the other sorbicillinoids such as disorbicillinol, bisvertinolon, dihydrobisvertinolone, and dihydrotrichotetronine. This Hypocrea jecorina (strain QM6a) (Trichoderma reesei) protein is Non-reducing polyketide synthase sor2.